Consider the following 299-residue polypeptide: MSSIKIECVLRENCHCGESPVWGEASNSLLFVDIPAKKVCRWNALSKQVQRVTLDAPVSSVALRQAGGYVATVGTKFCALNWEDESAVVLAAVDKDKKNNRFNDGKVDPAGRYFAGTMAEETAPAVLERHQGSLYALFADHHVEKYFDQVDISNGLDWSLDHKIFYYIDSLSYSVDAFDYDLQTGKISNRRSIYKMEKEEHIPDGMCIDTEGKLWVACYNGGRVIRLDPETGKRLQTVKLPVDKTTSCCFGGKDYSEMYVTCARDGLDPQGLLQQPEAGGIFKITGLGVKGLPPYPYAG.

Glu18 provides a ligand contact to a divalent metal cation. Arg101, Asn103, and Glu121 together coordinate substrate. A divalent metal cation is bound by residues Asn154 and Asp204. Residue Asp204 is the Proton donor/acceptor of the active site. Lys244 and Lys253 each carry N6-succinyllysine.

This sequence belongs to the SMP-30/CGR1 family. In terms of assembly, monomer. Zn(2+) serves as cofactor. It depends on Mn(2+) as a cofactor. Requires Ca(2+) as cofactor. The cofactor is Mg(2+).

It is found in the cytoplasm. The enzyme catalyses D-glucono-1,5-lactone + H2O = D-gluconate + H(+). Its pathway is cofactor biosynthesis; L-ascorbate biosynthesis via UDP-alpha-D-glucuronate pathway; L-ascorbate from UDP-alpha-D-glucuronate: step 3/4. Functionally, gluconolactonase with low activity towards other sugar lactones, including gulonolactone and galactonolactone. Catalyzes a key step in ascorbic acid (vitamin C) biosynthesis. Can also hydrolyze diisopropyl phosphorofluoridate and phenylacetate (in vitro). Calcium-binding protein. Modulates Ca(2+) signaling, and Ca(2+)-dependent cellular processes and enzyme activities. The sequence is that of Regucalcin (RGN) from Sus scrofa (Pig).